Reading from the N-terminus, the 72-residue chain is DNA-directed RNA polymerase subunit omega (72 aa).

It belongs to the RNA polymerase subunit omega family. As to quaternary structure, the RNAP catalytic core consists of 2 alpha, 1 beta, 1 beta' and 1 omega subunit. When a sigma factor is associated with the core the holoenzyme is formed, which can initiate transcription.

It carries out the reaction RNA(n) + a ribonucleoside 5'-triphosphate = RNA(n+1) + diphosphate. Promotes RNA polymerase assembly. Latches the N- and C-terminal regions of the beta' subunit thereby facilitating its interaction with the beta and alpha subunits. The chain is DNA-directed RNA polymerase subunit omega from Laribacter hongkongensis (strain HLHK9).